Reading from the N-terminus, the 252-residue chain is MRRYFIYLGYNGKNFRGWQIQPNGMTVQQSIEEALAILMRTPVPIVGAGRTDAGVHAHLMIAHFDWEEPIGDLVFLAEKLNRLLPKDIAVYKIVPVVPEAHARFDATSRTYKYYVTTKKDPFNHELVYKLPGRLDFEAMNEACKVLFDYIDFTSFSKLHTDVKTNNCHIQHAGWTQEGDIWVFTIRADRFLRNMVRAIVGTLLEVGRGRLTIDGFRNVIEAKDRCKAGTSVPGHALFLVDVTYPEELFPVED.

The Nucleophile role is filled by aspartate 52. Tyrosine 111 is a binding site for substrate.

Belongs to the tRNA pseudouridine synthase TruA family. In terms of assembly, homodimer.

It catalyses the reaction uridine(38/39/40) in tRNA = pseudouridine(38/39/40) in tRNA. Functionally, formation of pseudouridine at positions 38, 39 and 40 in the anticodon stem and loop of transfer RNAs. The chain is tRNA pseudouridine synthase A from Parabacteroides distasonis (strain ATCC 8503 / DSM 20701 / CIP 104284 / JCM 5825 / NCTC 11152).